The primary structure comprises 1297 residues: DNA-directed RNA polymerase subunit beta' (1297 aa).

Zn(2+) is bound by residues C60, C62, C75, and C78. Residues D535, D537, and D539 each coordinate Mg(2+). Zn(2+) contacts are provided by C883, C961, C968, and C971.

The protein belongs to the RNA polymerase beta' chain family. The RNAP catalytic core consists of 2 alpha, 1 beta, 1 beta' and 1 omega subunit. When a sigma factor is associated with the core the holoenzyme is formed, which can initiate transcription. Mg(2+) serves as cofactor. Zn(2+) is required as a cofactor.

The catalysed reaction is RNA(n) + a ribonucleoside 5'-triphosphate = RNA(n+1) + diphosphate. Its function is as follows. DNA-dependent RNA polymerase catalyzes the transcription of DNA into RNA using the four ribonucleoside triphosphates as substrates. This chain is DNA-directed RNA polymerase subunit beta', found in Salinispora tropica (strain ATCC BAA-916 / DSM 44818 / JCM 13857 / NBRC 105044 / CNB-440).